An 81-amino-acid polypeptide reads, in one-letter code: Sulfur carrier protein TusA (81 aa).

Cys-19 acts as the Cysteine persulfide intermediate in catalysis.

It belongs to the sulfur carrier protein TusA family.

It localises to the cytoplasm. Functionally, sulfur carrier protein which probably makes part of a sulfur-relay system. This Shewanella sediminis (strain HAW-EB3) protein is Sulfur carrier protein TusA.